Reading from the N-terminus, the 758-residue chain is ATP-dependent RNA helicase dbp7 (758 aa).

2 disordered regions span residues 28–98 (TWRD…NQPR) and 110–130 (EPQK…KPTN). Basic residues predominate over residues 35-45 (AKKIAKHHAKG). Residues 84–98 (GKQQSHGHPHSNQPR) show a composition bias toward polar residues. A compositionally biased stretch (basic and acidic residues) spans 110-125 (EPQKAEEVKEEGHVEN). Positions 138 to 167 (DTFTNLGLSPNLAAHLLTKLELKAPTAIQK) match the Q motif motif. The 202-residue stretch at 171-372 (SQLLKEEGDA…EISLKDAVHI (202 aa)) folds into the Helicase ATP-binding domain. 184-191 (AETGSGKT) provides a ligand contact to ATP. Residues 308–311 (DEGD) carry the DEAD box motif. One can recognise a Helicase C-terminal domain in the interval 398-620 (QLKQSYAVVA…NVESGNKDWE (223 aa)). Basic and acidic residues-rich tracts occupy residues 455-471 (KEDG…EEKP) and 697-709 (GKEE…KAER). Disordered stretches follow at residues 455-483 (KEDG…APAT) and 697-745 (GKEE…RAKM).

This sequence belongs to the DEAD box helicase family. DDX31/DBP7 subfamily.

The protein localises to the nucleus. Its subcellular location is the nucleolus. The enzyme catalyses ATP + H2O = ADP + phosphate + H(+). Functionally, ATP-binding RNA helicase involved in the biogenesis of 60S ribosomal subunits and is required for the normal formation of 25S and 5.8S rRNAs. The protein is ATP-dependent RNA helicase dbp7 (dbp7) of Aspergillus fumigatus (strain ATCC MYA-4609 / CBS 101355 / FGSC A1100 / Af293) (Neosartorya fumigata).